The primary structure comprises 407 residues: Serine/threonine transporter SstT (407 aa).

9 helical membrane-spanning segments follow: residues 12-32 (GNLIVQICIGIVLGILIGISS), 42-62 (LGILFTSALKAIAPMLVFILI), 81-101 (IIILYIVGTFLASACAVLANF), 141-161 (ALSSGNYLGILTWAIAGGIAL), 179-199 (VLKIVKFIVKLAPFGIFGLVA), 218-238 (ILLVTTMLFVTFVINALIVFF), 245-267 (FPLIFICLRHSAFFAFFTRSSAA), 288-308 (ISIPLGATINMAGAAVTIAIL), and 330-350 (IIATFAACGASGVAGGSLLLI).

The protein belongs to the dicarboxylate/amino acid:cation symporter (DAACS) (TC 2.A.23) family.

It localises to the cell inner membrane. The enzyme catalyses L-serine(in) + Na(+)(in) = L-serine(out) + Na(+)(out). The catalysed reaction is L-threonine(in) + Na(+)(in) = L-threonine(out) + Na(+)(out). Involved in the import of serine and threonine into the cell, with the concomitant import of sodium (symport system). This is Serine/threonine transporter SstT from Campylobacter jejuni subsp. jejuni serotype O:6 (strain 81116 / NCTC 11828).